Reading from the N-terminus, the 417-residue chain is Acetyltransferase cdmC (417 aa).

A glycan (N-linked (GlcNAc...) asparagine) is linked at Asn-64. A run of 3 helical transmembrane segments spans residues 308-328 (IPDG…GYLV), 357-377 (GIFW…YPLL), and 389-409 (LVES…AFIL).

The protein belongs to the wax synthase family.

It is found in the membrane. It catalyses the reaction chrodrimanin A + acetyl-CoA = chrodrimanin B + CoA. It functions in the pathway secondary metabolite biosynthesis; terpenoid biosynthesis. Its function is as follows. Acetyltransferase; part of the gene cluster that mediates the biosynthesis of chrodrimanin B, a meroterpenoid that acts as a potent blocker of insect GABA-gated chloride channels. The first step of the pathway is the biosynthesis of 6-hydroxymellein by the polyketide synthase cdmE. The prenyltransferase cdmH acts as a 6-hydroxymellein 5-farnesyltransferase and produces the hydrophobic metabolite verruculide C. The FAD-dependent monooxygenase cdmI further converts verruculide C into verruculide B. The terpene cyclase cdmG then produced the pentacyclic molecule 3-hydroxypentacecilide A, the backbone structure of chrodrimanin B, via folding the farnesyl moiety of the substrate into the chair-boat conformation. The short-chain dehydrogenase/reductase cdmF functions as the 3-OH dehydrogenase that oxidizes the C-3 hydroxyl group of 3-hydroxypentacecilide A and produces chrodrimanin C, the dehydrogenated product of 3-hydroxypentacecilide A. The cytochrome P450 monooxygenase cdmJ then accepts both 3-hydroxypentacecilide A and chrodrimanin C and functions as a C-7-beta-hydroxylase to produce respectively chrodrimanin H and chrodrimanin F. The dioxygenase cdmA accepts chrodrimanin H to afford chrodrimanin E, which is further transformed to chrodrimanin A by the dioxygenase cdmD. CdmA can also accept chrodrimanin C as substrate to convert it into verruculide A, which is further converted into chrodrimanin T by cdmD. The last step of the biosynthesis is proposed to be performed by the acetyltransferase cdmC which acetylates chrodrimanin A to yield chrodrimanin B. The pathway may also lead to the production of additional shunt products, including chrodrimanins T and U. The chain is Acetyltransferase cdmC from Talaromyces verruculosus (Penicillium verruculosum).